A 620-amino-acid polypeptide reads, in one-letter code: Lamin-B2 (620 aa).

The segment at 1 to 38 (MSPPSPGRRREQRRPRAAATMATPLPGRAGGPATPLSP) is disordered. The tract at residues 1 to 48 (MSPPSPGRRREQRRPRAAATMATPLPGRAGGPATPLSPTRLSRLQEKE) is head. Residues Thr-23 and Thr-34 each carry the phosphothreonine modification. Ser-37 carries the phosphoserine modification. In terms of domain architecture, IF rod spans 46-402 (EKEELRELND…KLLEGEEERL (357 aa)). The coil 1A stretch occupies residues 49 to 83 (ELRELNDRLAHYIDRVRALELENDRLLLKISEKEE). A Glycyl lysine isopeptide (Lys-Gly) (interchain with G-Cter in SUMO2) cross-link involves residue Lys-77. Lys-81 is subject to N6-acetyllysine; alternate. A Glycyl lysine isopeptide (Lys-Gly) (interchain with G-Cter in SUMO2); alternate cross-link involves residue Lys-81. Positions 84–95 (VTTREVSGIKAL) are linker 1. The interval 96 to 229 (YESELADARR…DFRKSVFEEE (134 aa)) is coil 1B. Glycyl lysine isopeptide (Lys-Gly) (interchain with G-Cter in SUMO2) cross-links involve residues Lys-195 and Lys-255. The linker 2 stretch occupies residues 230-256 (VRETRRRHERRLVEVDSSRQQEYDFKM). The tract at residues 257–400 (AQALEELRSQ…YRKLLEGEEE (144 aa)) is coil 2. Ser-316 and Ser-407 each carry phosphoserine. The segment at 399-464 (EERLKLSPSP…GTGGSGGFHL (66 aa)) is disordered. Residues 401 to 620 (RLKLSPSPSS…RTTSRGCYVM (220 aa)) form a tail region. Residues 404 to 431 (LSPSPSSRVTVSRATSSSSGSLSATGRL) show a composition bias toward low complexity. A glycan (O-linked (GlcNAc) threonine) is linked at Thr-413. Ser-420, Ser-422, Ser-424, and Ser-426 each carry phosphoserine. The residue at position 433 (Arg-433) is an Omega-N-methylarginine. A Nuclear localization signal motif is present at residues 435 to 440 (KRKRLE). The span at 444–453 (PLGSGPSVLG) shows a compositional bias: low complexity. Positions 462–579 (FHLAQQASAS…EEVAMRTVKK (118 aa)) constitute an LTD domain. Lys-489 participates in a covalent cross-link: Glycyl lysine isopeptide (Lys-Gly) (interchain with G-Cter in SUMO2). Phosphoserine is present on Ser-497. The interval 581-620 (SVMRENENGEEEEEEAEFGEEDLFHQQGDPRTTSRGCYVM) is disordered. Residues 588–601 (NGEEEEEEAEFGEE) are compositionally biased toward acidic residues. A compositionally biased stretch (polar residues) spans 609–620 (DPRTTSRGCYVM). Cys-617 is modified (cysteine methyl ester). A lipid anchor (S-farnesyl cysteine) is attached at Cys-617. Positions 618–620 (YVM) are cleaved as a propeptide — removed in mature form.

The protein belongs to the intermediate filament family. As to quaternary structure, dimer. Lamin dimers then assemble into dimeric head-to-tail polymers. Ultimately, two head-to-tail polymers assemble laterally into a protofilament with a uniformly shaped rod of 3.5 nm in diameter. Interacts with TMEM43. In terms of processing, B-type lamins undergo a series of modifications, such as farnesylation and phosphorylation. Increased phosphorylation of the lamins occurs before envelope disintegration and probably plays a role in regulating lamin associations. Post-translationally, phosphorylation plays a key role in lamin organization, subcellular localization and nuclear envelope disintegration. Phosphorylation by CDK1 at Ser-37 and Ser-407 at the onset of mitosis drives lamin disassembly and nuclear envelope breakdown.

It is found in the nucleus lamina. Lamins are intermediate filament proteins that assemble into a filamentous meshwork, and which constitute the major components of the nuclear lamina, a fibrous layer on the nucleoplasmic side of the inner nuclear membrane. Lamins provide a framework for the nuclear envelope, bridging the nuclear envelope and chromatin, thereby playing an important role in nuclear assembly, chromatin organization, nuclear membrane and telomere dynamics. The structural integrity of the lamina is strictly controlled by the cell cycle, as seen by the disintegration and formation of the nuclear envelope in prophase and telophase, respectively. This is Lamin-B2 (LMNB2) from Homo sapiens (Human).